Reading from the N-terminus, the 605-residue chain is Leucine aminopeptidase (605 aa).

The a peptide site is built by Lys-374, Asp-379, and Lys-386. The Zn(2+) site is built by Lys-374 and Asp-379. The segment at 384–401 (NLKAAPGSMIDLMKFDMS) is L13 loop. Residue Lys-386 is part of the active site. The Zn(2+) site is built by Asp-394, Met-396, Asp-399, Asp-459, and Glu-461. Residues Asp-399 and Asp-459 each coordinate a peptide. The active site involves Arg-463.

This sequence belongs to the peptidase M17 family. In terms of assembly, homohexamer composed of dimer of trimers. Both the identity and concentration of metal ions available dictate the extent to which oligomerization occurs; Mn(2+) and Co(2+) induces oligomerization, whereas Mg(2+) has no effect, and Zn(2+) causes irreversible protein aggregation in vitro. The cofactor is Zn(2+).

It localises to the cytoplasm. The catalysed reaction is Release of an N-terminal amino acid, Xaa-|-Yaa-, in which Xaa is preferably Leu, but may be other amino acids including Pro although not Arg or Lys, and Yaa may be Pro. Amino acid amides and methyl esters are also readily hydrolyzed, but rates on arylamides are exceedingly low.. The enzyme catalyses L-cysteinylglycine + H2O = L-cysteine + glycine. Its activity is regulated as follows. Oligomerization is required for catalytic activity and is metal-dependent. The type of metal that binds the 2 metal binding sites influences catalytic activity and substrate specificity. In vitro, activated by Co(2+), Mn(2+), Ni(2+), Mg(2+) and Zn(2+) with decreasing strength. Occupancy of the site 2 is essential and sufficient for activating the enzyme but occupation of the 2 sites is necessary for full catalytic activity. Inhibited by fungal metabolite bestatin. Inhibited by Phe-Naphthyl (PNAP). Aminopeptidase which preferentially cleaves leucine residues from the N-terminus of peptides. Also, has some activity towards tryptophan and methionine and to a lesser extent towards phenylalanine. Has very low activity or no activity towards the other amino acids. In addition, cleaves the Cys-Gly dipeptide, probably as part of the glutathione regulation pathway; cleavage only occurs in the presence of Mn(2+). During the asexual blood stage, plays a role in the final step of host hemoglobin catabolism, by cleaving hemoglobin-derived oligopeptides providing a source of amino acids for the parasite protein synthesis and for the maintenance of osmotic homeostasis. During the asexual blood stage, may also play a role during the ring-trophozoite transition. The chain is Leucine aminopeptidase from Plasmodium falciparum (isolate 3D7).